The sequence spans 316 residues: ATP synthase gamma chain (316 aa).

Belongs to the ATPase gamma chain family. F-type ATPases have 2 components, CF(1) - the catalytic core - and CF(0) - the membrane proton channel. CF(1) has five subunits: alpha(3), beta(3), gamma(1), delta(1), epsilon(1). CF(0) has three main subunits: a, b and c.

It localises to the cellular thylakoid membrane. Its function is as follows. Produces ATP from ADP in the presence of a proton gradient across the membrane. The gamma chain is believed to be important in regulating ATPase activity and the flow of protons through the CF(0) complex. This chain is ATP synthase gamma chain, found in Prochlorococcus marinus (strain MIT 9313).